We begin with the raw amino-acid sequence, 364 residues long: MLIRRLALHQLRRFSAVDLSPQPGLNLLTGDNGAGKTSVLEALHLMAYGRSFRGRVRDGLVRQGQEALEIFVEWDEQRADHPPHRRKAGLRHSGQDWKGRLDGEDVAQLGNLCAALAVVTFEPGSHALVSGGGEPRRRFLDWGLFHVEPDFLSLWRRYSRALKQRNALLKQGGPSRMLDTWDHELAEAGEPLTSRRQHYLERLQQRTVALAASLAPQLGIQGLELSPGWRRHELPLADALLLARERDRQAGYTSVGPHRADWSVDFHSIPGRDALSRGQAKLTALACLLAQAEDYAEQRGEWPVIALDDLASELDRTHQARVLERLLNGPAQIFITATETPAALLDLTHIARFHVEHAQIVAVP.

30-37 (GDNGAGKT) is a binding site for ATP.

The protein belongs to the RecF family.

It localises to the cytoplasm. In terms of biological role, the RecF protein is involved in DNA metabolism; it is required for DNA replication and normal SOS inducibility. RecF binds preferentially to single-stranded, linear DNA. It also seems to bind ATP. The polypeptide is DNA replication and repair protein RecF (Stenotrophomonas maltophilia (strain K279a)).